A 731-amino-acid chain; its full sequence is 1,4-alpha-glucan branching enzyme GlgB (731 aa).

Aspartate 411 (nucleophile) is an active-site residue. The active-site Proton donor is glutamate 464.

The protein belongs to the glycosyl hydrolase 13 family. GlgB subfamily. As to quaternary structure, monomer.

The catalysed reaction is Transfers a segment of a (1-&gt;4)-alpha-D-glucan chain to a primary hydroxy group in a similar glucan chain.. Its pathway is glycan biosynthesis; glycogen biosynthesis. Functionally, catalyzes the formation of the alpha-1,6-glucosidic linkages in glycogen by scission of a 1,4-alpha-linked oligosaccharide from growing alpha-1,4-glucan chains and the subsequent attachment of the oligosaccharide to the alpha-1,6 position. The chain is 1,4-alpha-glucan branching enzyme GlgB from Mycobacterium tuberculosis (strain ATCC 25177 / H37Ra).